We begin with the raw amino-acid sequence, 499 residues long: Ethanolamine-phosphate phospho-lyase (499 aa).

N6-(pyridoxal phosphate)lysine is present on Lys-278.

This sequence belongs to the class-III pyridoxal-phosphate-dependent aminotransferase family. Homotetramer. Pyridoxal 5'-phosphate is required as a cofactor.

Its subcellular location is the mitochondrion. It catalyses the reaction phosphoethanolamine + H2O = acetaldehyde + NH4(+) + phosphate. In terms of biological role, catalyzes the pyridoxal-phosphate-dependent breakdown of phosphoethanolamine, converting it to ammonia, inorganic phosphate and acetaldehyde. This chain is Ethanolamine-phosphate phospho-lyase (Etnppl), found in Mus musculus (Mouse).